Consider the following 209-residue polypeptide: Uridine kinase (209 aa).

ATP is bound at residue 12–19 (GGSGSGKT).

Belongs to the uridine kinase family.

The protein resides in the cytoplasm. The catalysed reaction is uridine + ATP = UMP + ADP + H(+). It catalyses the reaction cytidine + ATP = CMP + ADP + H(+). It functions in the pathway pyrimidine metabolism; CTP biosynthesis via salvage pathway; CTP from cytidine: step 1/3. Its pathway is pyrimidine metabolism; UMP biosynthesis via salvage pathway; UMP from uridine: step 1/1. The polypeptide is Uridine kinase (Listeria welshimeri serovar 6b (strain ATCC 35897 / DSM 20650 / CCUG 15529 / CIP 8149 / NCTC 11857 / SLCC 5334 / V8)).